Consider the following 208-residue polypeptide: Translation initiation factor IF-3 (208 aa).

It belongs to the IF-3 family. Monomer.

The protein resides in the cytoplasm. In terms of biological role, IF-3 binds to the 30S ribosomal subunit and shifts the equilibrium between 70S ribosomes and their 50S and 30S subunits in favor of the free subunits, thus enhancing the availability of 30S subunits on which protein synthesis initiation begins. The sequence is that of Translation initiation factor IF-3 from Parabacteroides distasonis (strain ATCC 8503 / DSM 20701 / CIP 104284 / JCM 5825 / NCTC 11152).